Reading from the N-terminus, the 118-residue chain is Large ribosomal subunit protein bL19 (118 aa).

This sequence belongs to the bacterial ribosomal protein bL19 family.

Its function is as follows. This protein is located at the 30S-50S ribosomal subunit interface and may play a role in the structure and function of the aminoacyl-tRNA binding site. The protein is Large ribosomal subunit protein bL19 of Nautilia profundicola (strain ATCC BAA-1463 / DSM 18972 / AmH).